A 205-amino-acid chain; its full sequence is uncharacterized protein (205 aa).

It belongs to the IIV-6 170L family.

This is an uncharacterized protein from Invertebrate iridescent virus 3 (IIV-3).